We begin with the raw amino-acid sequence, 81 residues long: GAMMA-ctenitoxin-Pn1a (81 aa).

A signal peptide spans 1-16 (MKVAIVFLSLLVLAFA). A propeptide spanning residues 17 to 34 (SESIEENREEFPVEESAR) is cleaved from the precursor. Disulfide bonds link cysteine 35–cysteine 49, cysteine 42–cysteine 55, cysteine 46–cysteine 81, cysteine 48–cysteine 65, and cysteine 57–cysteine 63.

This sequence belongs to the neurotoxin 03 (Tx2) family. 05 subfamily. In terms of tissue distribution, expressed by the venom gland.

The protein resides in the secreted. Its function is as follows. This insecticidal neurotoxin targets two types of channels/receptors. It reversibly inhibits the N-methyl-D-aspartate (NMDA)-subtype of ionotropic glutamate receptor (GRIN). It inhibits glutamate uptake from rat brain synaptosomes, and blocks GRIN in hippocampal slices. It also acts on sodium channels of both insects and mammals. On sodium channel insects, it strongly slows down channel inactivation (EC(50)=212.5 nM) and causes an increase (105%) in peak amplitude (at 1 uM) of B.germanica sodium channel (Nav), whereas it inhibits all mammalien sodium channels tested with the following order of potency: Nav1.3/SCN3A (IC(50)=1.5 uM) &gt; Nav1.6/SCN8A &gt; Nav1.5/SCN5A &gt; Nav1.4/SCN4A &gt;= Nav1.2/SCN2A. In vivo, it is highly toxic to house fly (Musca domestica), cockroach (Periplaneta americana), and cricket (Acheta domesticus). In different rat pain models (induced by PGE2, carrageenan or glutamate), it shows antinociceptive effect that may be related to an inhibitory activity on the glutamatergic system. The chain is GAMMA-ctenitoxin-Pn1a from Phoneutria nigriventer (Brazilian armed spider).